The primary structure comprises 177 residues: Probable DNA-directed RNA polymerase subunit delta (177 aa).

The region spanning 14-81 (CSMIEVVHSV…GENRWGLRSW (68 aa)) is the HTH HARE-type domain. The disordered stretch occupies residues 91 to 177 (ILPQPKPKKK…DETEEEEEEL (87 aa)). The span at 106-177 (DGFDDYIEED…DETEEEEEEL (72 aa)) shows a compositional bias: acidic residues.

Belongs to the RpoE family. RNAP is composed of a core of 2 alpha, a beta and a beta' subunits. The core is associated with a delta subunit and one of several sigma factors.

In terms of biological role, participates in both the initiation and recycling phases of transcription. In the presence of the delta subunit, RNAP displays an increased specificity of transcription, a decreased affinity for nucleic acids, and an increased efficiency of RNA synthesis because of enhanced recycling. This chain is Probable DNA-directed RNA polymerase subunit delta, found in Bacillus cereus (strain G9842).